The primary structure comprises 246 residues: Acetoacetate decarboxylase (246 aa).

The active-site Schiff-base intermediate with acetoacetate is Lys-116.

Belongs to the ADC family.

The enzyme catalyses acetoacetate + H(+) = acetone + CO2. In terms of biological role, catalyzes the conversion of acetoacetate to acetone and carbon dioxide. The chain is Acetoacetate decarboxylase from Burkholderia vietnamiensis (strain G4 / LMG 22486) (Burkholderia cepacia (strain R1808)).